The following is a 33-amino-acid chain: U13-ctenitoxin-Pn1c (33 aa).

Disulfide bonds link C3–C17, C10–C21, and C16–C30.

In terms of tissue distribution, expressed by the venom gland.

It localises to the secreted. Acts as a neurotoxin. The chain is U13-ctenitoxin-Pn1c from Phoneutria nigriventer (Brazilian armed spider).